Here is a 418-residue protein sequence, read N- to C-terminus: Metal tolerance protein 1 (418 aa).

Topologically, residues 1–56 are cytoplasmic; that stretch reads MDSHNSAPPQIAEVRMDISSSTSVAAGNKVCRGAACDFSDSSNSSKDARERMASMR. Residues 57–77 form a helical membrane-spanning segment; that stretch reads KLIIAVILCIIFMAVEVVGGI. At 78–89 the chain is on the vacuolar side; it reads KANSLAILTDAA. Residues 90–110 traverse the membrane as a helical segment; the sequence is HLLSDVAAFAISLFSLWAAGW. Topologically, residues 111–122 are cytoplasmic; the sequence is EATPQQSYGFFR. Residues 123–143 traverse the membrane as a helical segment; the sequence is IEILGALVSIQLIWLLAGILV. Over 144 to 160 the chain is Vacuolar; sequence YEAIVRLINESGEVQGS. Residues 161–181 form a helical membrane-spanning segment; the sequence is LMFAVSAFGLFVNIIMAVLLG. The tract at residues 182-246 is required for zinc-binding; it reads HDHGHGHGHG…HHPGTGHHHH (65 aa). Topologically, residues 182-282 are cytoplasmic; it reads HDHGHGHGHG…RRNINVHSAY (101 aa). The disordered stretch occupies residues 186 to 248; that stretch reads HGHGHGHGHG…PGTGHHHHDA (63 aa). Positions 196–227 are enriched in basic and acidic residues; that stretch reads HSHDHDHGGSDHDHHHHEDQEHGHVHHHEDGH. Residues 235 to 245 are compositionally biased toward basic residues; sequence LHHHPGTGHHH. Residues 283–303 traverse the membrane as a helical segment; it reads LHVLGDSIQSIGVMIGGAIIW. Topologically, residues 304–307 are vacuolar; it reads YKPE. The chain crosses the membrane as a helical span at residues 308–328; that stretch reads WKIIDLICTLIFSVIVLFTTI. Residues 329 to 418 lie on the Cytoplasmic side of the membrane; that stretch reads KMLRNILEVL…SHVTIQIERE (90 aa).

This sequence belongs to the cation diffusion facilitator (CDF) transporter (TC 2.A.4) family. SLC30A subfamily.

It localises to the vacuole membrane. Functionally, involved in sequestration of excess zinc in the cytoplasm into vacuoles to maintain zinc homeostasis. In Oryza sativa subsp. japonica (Rice), this protein is Metal tolerance protein 1 (MTP1).